We begin with the raw amino-acid sequence, 524 residues long: Glycoprotein (524 aa).

Positions 1–19 are cleaved as a signal peptide; that stretch reads MVPQALLFVPLLVFPLCFG. The Virion surface portion of the chain corresponds to 20–459; sequence KFPIYTILDK…DLGLPNWGKY (440 aa). 6 cysteine pairs are disulfide-bonded: Cys-43–Cys-302, Cys-54–Cys-226, Cys-80–Cys-113, Cys-178–Cys-188, Cys-208–Cys-247, and Cys-242–Cys-271. An N-linked (GlcNAc...) asparagine; by host glycan is attached at Asn-56. N-linked (GlcNAc...) asparagine; by host glycans are attached at residues Asn-266 and Asn-338. Residues Cys-363 and Cys-370 are joined by a disulfide bond. Residues 460-480 form a helical membrane-spanning segment; it reads VLLSAGALTALMLIIFLMTCC. A lipid anchor (S-palmitoyl cysteine; by host) is attached at Cys-480. At 481–524 the chain is on the intravirion side; it reads RRVNRSEPTQHNLRGTGREVSVTPQSGKIISSWESHKSGGETRL.

Belongs to the lyssavirus glycoprotein family. In terms of assembly, homotrimer. Interacts with matrix protein. Interacts with host TRFC. Interacts with host BST2; this interaction inhibits viral budding by tethering new virions to the cell surface. Interacts with ITGB1. Interacts with host GRM2. Post-translationally, glycosylated and palmitoylated by host. Glycosylation is crucial for glycoprotein export at the cell surface.

The protein resides in the virion membrane. In terms of biological role, attaches the virus to host cellular receptor, inducing endocytosis of the virion by using different host proteins including TFRC, GRM2 and ITGB1. In the endosome, the acidic pH induces conformational changes in the glycoprotein trimer, which trigger fusion between virus and cell membrane. There is convincing in vitro evidence that the muscular form of the nicotinic acetylcholine receptor (nAChR), the neuronal cell adhesion molecule (NCAM), and the p75 neurotrophin receptor (p75NTR) bind glycoprotein and thereby facilitate rabies virus entry into cells. The polypeptide is Glycoprotein (G) (Rabies virus (strain ERA) (RABV)).